We begin with the raw amino-acid sequence, 871 residues long: Chaperone protein ClpB 1 (871 aa).

In terms of domain architecture, Clp R spans 6–147 (PNQFTEKAWA…REAIQQIRGS (142 aa)). 2 repeat regions span residues 9–73 (FTEK…ISRQ) and 84–147 (LGQS…IRGS). The tract at residues 160–341 (AALEKYGRDL…RRFQQVYVDQ (182 aa)) is NBD1. 207-214 (GEPGVGKT) is an ATP binding site. The tract at residues 342–550 (PSVEDTISIL…IAEIISKWTG (209 aa)) is linker. Residues 392 to 526 (IDLVDEAAAK…AEAKLREIQV (135 aa)) are a coiled coil. The interval 560–771 (EAQKLLHLEE…RVDEFIIFHS (212 aa)) is NBD2. ATP is bound at residue 610-617 (GPTGVGKT). Residues 772–871 (LRKDQLRQIV…FRRQVELATV (100 aa)) are C-terminal.

Belongs to the ClpA/ClpB family. In terms of assembly, homohexamer. The oligomerization is ATP-dependent.

It localises to the cytoplasm. Part of a stress-induced multi-chaperone system, it is involved in the recovery of the cell from heat-induced damage, in cooperation with DnaK, DnaJ and GrpE. Acts before DnaK, in the processing of protein aggregates. Protein binding stimulates the ATPase activity; ATP hydrolysis unfolds the denatured protein aggregates, which probably helps expose new hydrophobic binding sites on the surface of ClpB-bound aggregates, contributing to the solubilization and refolding of denatured protein aggregates by DnaK. The sequence is that of Chaperone protein ClpB 1 (clpB1) from Thermosynechococcus vestitus (strain NIES-2133 / IAM M-273 / BP-1).